Here is a 372-residue protein sequence, read N- to C-terminus: Dual-specificity RNA methyltransferase RlmN (372 aa).

E94 (proton acceptor) is an active-site residue. Positions 100–339 constitute a Radical SAM core domain; the sequence is DGDRATLCVS…VTIRKTRGDD (240 aa). A disulfide bond links C107 and C344. Positions 114, 118, and 121 each coordinate [4Fe-4S] cluster. S-adenosyl-L-methionine is bound by residues 168–169, S200, 222–224, and N301; these read GE and SLH. Catalysis depends on C344, which acts as the S-methylcysteine intermediate.

It belongs to the radical SAM superfamily. RlmN family. [4Fe-4S] cluster serves as cofactor.

The protein localises to the cytoplasm. It carries out the reaction adenosine(2503) in 23S rRNA + 2 reduced [2Fe-2S]-[ferredoxin] + 2 S-adenosyl-L-methionine = 2-methyladenosine(2503) in 23S rRNA + 5'-deoxyadenosine + L-methionine + 2 oxidized [2Fe-2S]-[ferredoxin] + S-adenosyl-L-homocysteine. It catalyses the reaction adenosine(37) in tRNA + 2 reduced [2Fe-2S]-[ferredoxin] + 2 S-adenosyl-L-methionine = 2-methyladenosine(37) in tRNA + 5'-deoxyadenosine + L-methionine + 2 oxidized [2Fe-2S]-[ferredoxin] + S-adenosyl-L-homocysteine. Specifically methylates position 2 of adenine 2503 in 23S rRNA and position 2 of adenine 37 in tRNAs. m2A2503 modification seems to play a crucial role in the proofreading step occurring at the peptidyl transferase center and thus would serve to optimize ribosomal fidelity. The protein is Dual-specificity RNA methyltransferase RlmN of Aliivibrio fischeri (strain MJ11) (Vibrio fischeri).